The sequence spans 204 residues: Leucyl/phenylalanyl-tRNA--protein transferase (204 aa).

It belongs to the L/F-transferase family.

It localises to the cytoplasm. The enzyme catalyses N-terminal L-lysyl-[protein] + L-leucyl-tRNA(Leu) = N-terminal L-leucyl-L-lysyl-[protein] + tRNA(Leu) + H(+). It carries out the reaction N-terminal L-arginyl-[protein] + L-leucyl-tRNA(Leu) = N-terminal L-leucyl-L-arginyl-[protein] + tRNA(Leu) + H(+). The catalysed reaction is L-phenylalanyl-tRNA(Phe) + an N-terminal L-alpha-aminoacyl-[protein] = an N-terminal L-phenylalanyl-L-alpha-aminoacyl-[protein] + tRNA(Phe). Its function is as follows. Functions in the N-end rule pathway of protein degradation where it conjugates Leu, Phe and, less efficiently, Met from aminoacyl-tRNAs to the N-termini of proteins containing an N-terminal arginine or lysine. The protein is Leucyl/phenylalanyl-tRNA--protein transferase of Rhizobium johnstonii (strain DSM 114642 / LMG 32736 / 3841) (Rhizobium leguminosarum bv. viciae).